The chain runs to 734 residues: Photosystem I P700 chlorophyll a apoprotein A2 (734 aa).

8 helical membrane passes run Ile46–Ala69, Leu135–Gln158, Leu175–Ile199, Ile273–Tyr291, Leu330–Tyr353, Ala369–Ile395, Ala417–His439, and Phe517–Val535. Residues Cys559 and Cys568 each contribute to the [4Fe-4S] cluster site. 2 helical membrane-spanning segments follow: residues Ala575–Trp596 and Leu643–Ile665. The chlorophyll a site is built by His654, Met662, and Tyr670. Trp671 is a phylloquinone binding site. The chain crosses the membrane as a helical span at residues Leu707–Ala727.

Belongs to the PsaA/PsaB family. As to quaternary structure, the PsaA/B heterodimer binds the P700 chlorophyll special pair and subsequent electron acceptors. PSI consists of a core antenna complex that captures photons, and an electron transfer chain that converts photonic excitation into a charge separation. The eukaryotic PSI reaction center is composed of at least 11 subunits. P700 is a chlorophyll a/chlorophyll a' dimer, A0 is one or more chlorophyll a, A1 is one or both phylloquinones and FX is a shared 4Fe-4S iron-sulfur center. serves as cofactor.

Its subcellular location is the plastid. It is found in the chloroplast thylakoid membrane. The enzyme catalyses reduced [plastocyanin] + hnu + oxidized [2Fe-2S]-[ferredoxin] = oxidized [plastocyanin] + reduced [2Fe-2S]-[ferredoxin]. Its function is as follows. PsaA and PsaB bind P700, the primary electron donor of photosystem I (PSI), as well as the electron acceptors A0, A1 and FX. PSI is a plastocyanin-ferredoxin oxidoreductase, converting photonic excitation into a charge separation, which transfers an electron from the donor P700 chlorophyll pair to the spectroscopically characterized acceptors A0, A1, FX, FA and FB in turn. Oxidized P700 is reduced on the lumenal side of the thylakoid membrane by plastocyanin. The protein is Photosystem I P700 chlorophyll a apoprotein A2 of Nicotiana tabacum (Common tobacco).